Consider the following 600-residue polypeptide: CBP80/20-dependent translation initiation factor (600 aa).

Met-1 is modified (N-acetylmethionine). Residues 1 to 18 (MENSSAASASSEAGSSRS) are compositionally biased toward low complexity. Disordered regions lie at residues 1–20 (MENSSAASASSEAGSSRSQE), 43–62 (DKTEGDGESQRTQSHISQWT), 134–154 (KQPLPHIDREGCGKGKLEDGD), and 175–370 (PHEA…SSPQ). The interaction with NCBP1/CBP80 stretch occupies residues 1-305 (MENSSAASAS…PPCSPDTLTP (305 aa)). Position 18 is a phosphoserine (Ser-18). The span at 52–62 (QRTQSHISQWT) shows a compositional bias: polar residues. A compositionally biased stretch (basic and acidic residues) spans 139–152 (HIDREGCGKGKLED). A compositionally biased stretch (basic residues) spans 183-198 (TKKLFRRRRNDRRRQQ). A compositionally biased stretch (basic and acidic residues) spans 258 to 272 (PPGDKGEAGSHRNAK). The residue at position 289 (Thr-289) is a Phosphothreonine. Ser-299 is subject to Phosphoserine. Over residues 321-339 (AEIKHKDTVLPERLRERPK) the composition is skewed to basic and acidic residues. Residues 378-579 (MEILNIMRNN…LEVIELHANS (202 aa)) enclose the MIF4G domain.

Belongs to the CTIF family. In terms of assembly, interacts with NCBP1/CBP80; the interaction is direct. Associates with the eukaryotic translation initiation factor 3 (eIF-3) complex. Widely expressed.

The protein localises to the cytoplasm. Its subcellular location is the perinuclear region. Specifically required for the pioneer round of mRNA translation mediated by the cap-binding complex (CBC), that takes place during or right after mRNA export via the nuclear pore complex (NPC). Acts via its interaction with the NCBP1/CBP80 component of the CBC complex and recruits the 40S small subunit of the ribosome via eIF3. In contrast, it is not involved in steady state translation, that takes place when the CBC complex is replaced by cytoplasmic cap-binding protein eIF4E. Also required for nonsense-mediated mRNA decay (NMD), the pioneer round of mRNA translation mediated by the cap-binding complex playing a central role in nonsense-mediated mRNA decay (NMD). In Mus musculus (Mouse), this protein is CBP80/20-dependent translation initiation factor (Ctif).